The sequence spans 417 residues: Phosphoglycerate kinase 2 (417 aa).

Ser2 is modified (N-acetylserine). Ser2 and Ser4 each carry phosphoserine. Lys11 is modified (N6-acetyllysine). Positions 23, 24, 25, 26, 38, and 39 each coordinate (2R)-3-phosphoglycerate. Lys48 bears the N6-acetyllysine mark. (2R)-3-phosphoglycerate is bound by residues Ser62, His63, Gly65, and Arg66. Residues Lys75, Lys86, and Lys97 each carry the N6-acetyllysine modification. Leu122 and Arg123 together coordinate (2R)-3-phosphoglycerate. 2 positions are modified to N6-acetyllysine: Lys131 and Lys146. (2R)-3-phosphoglycerate contacts are provided by His170 and Arg171. Tyr196 carries the post-translational modification Phosphotyrosine. Residue Lys199 is modified to N6-acetyllysine. Gly214 contacts ADP. A CDP-binding site is contributed by Gly214. AMP contacts are provided by Ala215 and Lys216. Ala215 provides a ligand contact to ATP. A Mg(2+)-binding site is contributed by Ala215. 2 residues coordinate Mg(2+): Ala218 and Asp219. Asp219 is a CDP binding site. Lys220 provides a ligand contact to AMP. Lys220 contacts ATP. Gly238 provides a ligand contact to ADP. Gly238 serves as a coordination point for CDP. Gly239 serves as a coordination point for AMP. Gly239 serves as a coordination point for ATP. N6-acetyllysine occurs at positions 267 and 291. An AMP-binding site is contributed by Gly313. An ATP-binding site is contributed by Gly313. The CDP site is built by Gly338 and Phe343. Phe343 serves as a coordination point for ADP. Residue Glu344 coordinates AMP. The ATP site is built by Glu344, Asp375, and Thr376. A Mg(2+)-binding site is contributed by Asp375.

Belongs to the phosphoglycerate kinase family. Monomer. Mg(2+) serves as cofactor. As to expression, mainly found in round spermatids. Localized on the principle piece in the sperm (at protein level). Testis-specific. Expression significantly decreased in the testis of elderly men.

The protein resides in the cytoplasm. The enzyme catalyses (2R)-3-phosphoglycerate + ATP = (2R)-3-phospho-glyceroyl phosphate + ADP. Its pathway is carbohydrate degradation; glycolysis; pyruvate from D-glyceraldehyde 3-phosphate: step 2/5. Functionally, essential for sperm motility and male fertility. Not required for the completion of spermatogenesis. This chain is Phosphoglycerate kinase 2 (PGK2), found in Homo sapiens (Human).